The sequence spans 276 residues: Undecaprenyl-diphosphatase (276 aa).

Transmembrane regions (helical) follow at residues Gly-40–Trp-60, Trp-98–Ile-118, Ile-121–Tyr-141, Met-155–Ile-175, Phe-200–Thr-220, Val-227–Met-247, and Leu-255–Val-275.

The protein belongs to the UppP family.

The protein resides in the cell membrane. The catalysed reaction is di-trans,octa-cis-undecaprenyl diphosphate + H2O = di-trans,octa-cis-undecaprenyl phosphate + phosphate + H(+). Its function is as follows. Catalyzes the dephosphorylation of undecaprenyl diphosphate (UPP). In Methanosphaera stadtmanae (strain ATCC 43021 / DSM 3091 / JCM 11832 / MCB-3), this protein is Undecaprenyl-diphosphatase.